Here is a 449-residue protein sequence, read N- to C-terminus: Phosphoribosylamine--glycine ligase (449 aa).

Positions 112 to 325 constitute an ATP-grasp domain; that stretch reads RELMEKYDIP…IVTLHASIAE (214 aa). 139–202 serves as a coordination point for ATP; sequence IDELGKPVAV…EEKCVGEEYT (64 aa). Q283, E295, and N297 together coordinate Mg(2+). Mn(2+) is bound by residues Q283, E295, and N297.

Belongs to the GARS family. The cofactor is Mg(2+). Mn(2+) serves as cofactor.

It carries out the reaction 5-phospho-beta-D-ribosylamine + glycine + ATP = N(1)-(5-phospho-beta-D-ribosyl)glycinamide + ADP + phosphate + H(+). The protein operates within purine metabolism; IMP biosynthesis via de novo pathway; N(1)-(5-phospho-D-ribosyl)glycinamide from 5-phospho-alpha-D-ribose 1-diphosphate: step 2/2. The chain is Phosphoribosylamine--glycine ligase from Methanopyrus kandleri (strain AV19 / DSM 6324 / JCM 9639 / NBRC 100938).